An 81-amino-acid chain; its full sequence is Large ribosomal subunit protein bL31B (81 aa).

It belongs to the bacterial ribosomal protein bL31 family. Type B subfamily. As to quaternary structure, part of the 50S ribosomal subunit.

The protein is Large ribosomal subunit protein bL31B of Borreliella burgdorferi (strain ATCC 35210 / DSM 4680 / CIP 102532 / B31) (Borrelia burgdorferi).